We begin with the raw amino-acid sequence, 470 residues long: Pre-mycofactocin glycosyltransferase (470 aa).

The helical transmembrane segment at 315-335 (LVISGGALMAWILMSIGTGLG) threads the bilayer.

Belongs to the glycosyltransferase 2 family.

It is found in the cell membrane. Its function is as follows. Involved in the biosynthesis of the enzyme cofactor mycofactocin (MFT). Acts as a glycosyltransferase that catalyzes the oligoglycosylation of pre-mycofactocin (PMFT), adding up to nine beta-1,4-linked glucose residues. Is required for the in vivo ethanol assimilation in M.smegmatis. This is Pre-mycofactocin glycosyltransferase (mftF) from Mycobacterium tuberculosis (strain CDC 1551 / Oshkosh).